A 694-amino-acid polypeptide reads, in one-letter code: Phosphatase and actin regulator 4-A (694 aa).

Composition is skewed to basic and acidic residues over residues 1-13 (MEDRSEEGGDHSE) and 46-72 (SSDSFRETSEVLERKISTRKPREELIK). Disordered regions lie at residues 1–29 (MEDRSEEGGDHSEMPSAPSTPPSKRKSKF), 42–169 (RKRK…QPLP), 192–403 (VNEV…HIRI), 426–445 (LFMQNDMGPSEEGTRVRSLP), and 450–572 (LLKV…QIRQ). One copy of the RPEL 1 repeat lies at 55–80 (EVLERKISTRKPREELIKRGLLVEVP). The span at 240–267 (SISTSVTQESAVAGQKSDSSNRLQSSAP) shows a compositional bias: polar residues. Over residues 300-317 (AELSLALAGSPLSPAGSR) the composition is skewed to low complexity. Composition is skewed to pro residues over residues 318–327 (PSPPLPPKRA) and 372–381 (SNPPVPPLTL). 3 stretches are compositionally biased toward acidic residues: residues 455-467 (DDEDDESLEDESL), 499-511 (QEEEEGGVSDTDS), and 519-529 (DDEEEEEEEET). RPEL repeat units follow at residues 576–601 (TQLNRRLSQRPTAEELEQRNILQKNE) and 613–638 (RRLTRKLSQRPTVAELVERKILRFNE).

The protein belongs to the phosphatase and actin regulator family. In terms of assembly, binds ppp1ca and actin.

It is found in the cytoplasm. Its subcellular location is the cell projection. The protein localises to the lamellipodium. Functionally, regulator of protein phosphatase 1 (PP1) required for neural tube and optic fissure closure, and enteric neural crest cell (ENCCs) migration during development. Acts as an activator of PP1. During neural tube closure, localizes to the ventral neural tube and activates PP1, leading to down-regulate cell proliferation within cranial neural tissue and the neural retina. Also acts as a regulator of migration of enteric neural crest cells (ENCCs) by activating PP1, leading to repression of the integrin signaling through the rho/rock pathway. This is Phosphatase and actin regulator 4-A (phactr4-a) from Xenopus laevis (African clawed frog).